The primary structure comprises 331 residues: Protein C10 (331 aa).

It belongs to the poxviridae C4/C10 protein family.

In Vaccinia virus (strain Western Reserve) (VACV), this protein is Protein C10.